A 378-amino-acid chain; its full sequence is Chorismate synthase (378 aa).

The disordered stretch occupies residues 37 to 60; it reads EEEIQKDLTRRRPGQNDLTTPRDE. R47 is a binding site for NADP(+). Residues 124 to 126, G289, 304 to 308, and R330 each bind FMN; these read RSS and KPTST.

Belongs to the chorismate synthase family. In terms of assembly, homotetramer. FMNH2 serves as cofactor.

The enzyme catalyses 5-O-(1-carboxyvinyl)-3-phosphoshikimate = chorismate + phosphate. It participates in metabolic intermediate biosynthesis; chorismate biosynthesis; chorismate from D-erythrose 4-phosphate and phosphoenolpyruvate: step 7/7. Functionally, catalyzes the anti-1,4-elimination of the C-3 phosphate and the C-6 proR hydrogen from 5-enolpyruvylshikimate-3-phosphate (EPSP) to yield chorismate, which is the branch point compound that serves as the starting substrate for the three terminal pathways of aromatic amino acid biosynthesis. This reaction introduces a second double bond into the aromatic ring system. This chain is Chorismate synthase, found in Leptospira biflexa serovar Patoc (strain Patoc 1 / Ames).